The primary structure comprises 235 residues: tRNA pseudouridine synthase B (235 aa).

Aspartate 45 serves as the catalytic Nucleophile.

It belongs to the pseudouridine synthase TruB family. Type 1 subfamily.

It catalyses the reaction uridine(55) in tRNA = pseudouridine(55) in tRNA. Functionally, responsible for synthesis of pseudouridine from uracil-55 in the psi GC loop of transfer RNAs. This chain is tRNA pseudouridine synthase B, found in Chlamydia felis (strain Fe/C-56) (Chlamydophila felis).